Consider the following 359-residue polypeptide: tRNA-specific 2-thiouridylase MnmA (359 aa).

ATP is bound by residues 9-16 (GMSGGVDS) and methionine 35. Residue cysteine 105 is the Nucleophile of the active site. Cysteines 105 and 203 form a disulfide. An ATP-binding site is contributed by glycine 129. Positions 153–155 (KDQ) are interaction with tRNA. The active-site Cysteine persulfide intermediate is cysteine 203. The interaction with tRNA stretch occupies residues 309-310 (RY).

This sequence belongs to the MnmA/TRMU family.

The protein localises to the cytoplasm. The catalysed reaction is S-sulfanyl-L-cysteinyl-[protein] + uridine(34) in tRNA + AH2 + ATP = 2-thiouridine(34) in tRNA + L-cysteinyl-[protein] + A + AMP + diphosphate + H(+). Catalyzes the 2-thiolation of uridine at the wobble position (U34) of tRNA, leading to the formation of s(2)U34. This is tRNA-specific 2-thiouridylase MnmA from Acetivibrio thermocellus (strain ATCC 27405 / DSM 1237 / JCM 9322 / NBRC 103400 / NCIMB 10682 / NRRL B-4536 / VPI 7372) (Clostridium thermocellum).